A 466-amino-acid polypeptide reads, in one-letter code: Methylenetetrahydrofolate--tRNA-(uracil-5-)-methyltransferase TrmFO (466 aa).

An FAD-binding site is contributed by 14–19 (GGGLAG).

The protein belongs to the MnmG family. TrmFO subfamily. It depends on FAD as a cofactor.

The protein resides in the cytoplasm. The catalysed reaction is uridine(54) in tRNA + (6R)-5,10-methylene-5,6,7,8-tetrahydrofolate + NADH + H(+) = 5-methyluridine(54) in tRNA + (6S)-5,6,7,8-tetrahydrofolate + NAD(+). The enzyme catalyses uridine(54) in tRNA + (6R)-5,10-methylene-5,6,7,8-tetrahydrofolate + NADPH + H(+) = 5-methyluridine(54) in tRNA + (6S)-5,6,7,8-tetrahydrofolate + NADP(+). Its function is as follows. Catalyzes the folate-dependent formation of 5-methyl-uridine at position 54 (M-5-U54) in all tRNAs. This is Methylenetetrahydrofolate--tRNA-(uracil-5-)-methyltransferase TrmFO from Brucella melitensis biotype 1 (strain ATCC 23456 / CCUG 17765 / NCTC 10094 / 16M).